A 635-amino-acid chain; its full sequence is Probable Xaa-Pro aminopeptidase P (635 aa).

Positions 432, 443, 541, and 555 each coordinate Mn(2+).

It belongs to the peptidase M24B family. The cofactor is Mn(2+).

The enzyme catalyses Release of any N-terminal amino acid, including proline, that is linked to proline, even from a dipeptide or tripeptide.. Its function is as follows. Catalyzes the removal of a penultimate prolyl residue from the N-termini of peptides. The sequence is that of Probable Xaa-Pro aminopeptidase P (AMPP) from Arthroderma gypseum (strain ATCC MYA-4604 / CBS 118893) (Microsporum gypseum).